A 273-amino-acid polypeptide reads, in one-letter code: 2,3,4,5-tetrahydropyridine-2,6-dicarboxylate N-succinyltransferase (273 aa).

2 residues coordinate substrate: R104 and D141.

The protein belongs to the transferase hexapeptide repeat family. As to quaternary structure, homotrimer.

The protein resides in the cytoplasm. It catalyses the reaction (S)-2,3,4,5-tetrahydrodipicolinate + succinyl-CoA + H2O = (S)-2-succinylamino-6-oxoheptanedioate + CoA. It participates in amino-acid biosynthesis; L-lysine biosynthesis via DAP pathway; LL-2,6-diaminopimelate from (S)-tetrahydrodipicolinate (succinylase route): step 1/3. The sequence is that of 2,3,4,5-tetrahydropyridine-2,6-dicarboxylate N-succinyltransferase from Nitrosococcus oceani (strain ATCC 19707 / BCRC 17464 / JCM 30415 / NCIMB 11848 / C-107).